The sequence spans 176 residues: Shikimate kinase (176 aa).

14-19 (GAGKSS) contributes to the ATP binding site. S18 contributes to the Mg(2+) binding site. Substrate is bound by residues D36, R60, and G82. Position 120 (R120) interacts with ATP. R138 contacts substrate.

It belongs to the shikimate kinase family. In terms of assembly, monomer. Mg(2+) serves as cofactor.

It is found in the cytoplasm. It carries out the reaction shikimate + ATP = 3-phosphoshikimate + ADP + H(+). Its pathway is metabolic intermediate biosynthesis; chorismate biosynthesis; chorismate from D-erythrose 4-phosphate and phosphoenolpyruvate: step 5/7. Catalyzes the specific phosphorylation of the 3-hydroxyl group of shikimic acid using ATP as a cosubstrate. In Dehalococcoides mccartyi (strain ATCC BAA-2266 / KCTC 15142 / 195) (Dehalococcoides ethenogenes (strain 195)), this protein is Shikimate kinase.